A 524-amino-acid chain; its full sequence is Phosphoenolpyruvate carboxykinase (ATP) (524 aa).

Substrate-binding residues include arginine 52, tyrosine 188, and lysine 194. ATP is bound by residues lysine 194, histidine 213, and 229–237; that span reads GLSGTGKTT. 2 residues coordinate Mn(2+): lysine 194 and histidine 213. Aspartate 250 contacts Mn(2+). Glutamate 278, arginine 314, and threonine 439 together coordinate ATP. Arginine 314 serves as a coordination point for substrate.

This sequence belongs to the phosphoenolpyruvate carboxykinase (ATP) family. Mn(2+) serves as cofactor.

The protein localises to the cytoplasm. The enzyme catalyses oxaloacetate + ATP = phosphoenolpyruvate + ADP + CO2. The protein operates within carbohydrate biosynthesis; gluconeogenesis. Functionally, involved in the gluconeogenesis. Catalyzes the conversion of oxaloacetate (OAA) to phosphoenolpyruvate (PEP) through direct phosphoryl transfer between the nucleoside triphosphate and OAA. The chain is Phosphoenolpyruvate carboxykinase (ATP) from Campylobacter lari (strain RM2100 / D67 / ATCC BAA-1060).